We begin with the raw amino-acid sequence, 712 residues long: WD repeat-containing protein 91 (712 aa).

Residues 148-180 adopt a coiled-coil conformation; the sequence is RRTNQVQEENEVLRQKLFALQAEIHRLKKEEQQ. Serine 221 is modified (phosphoserine). Residues 230–243 are compositionally biased toward low complexity; the sequence is LLPQSKKSPSRLSP. Residues 230-336 are disordered; that stretch reads LLPQSKKSPS…EAEPCPELHT (107 aa). Serine 253 and serine 258 each carry phosphoserine. A compositionally biased stretch (basic and acidic residues) spans 297 to 308; that stretch reads RLQDHGKERKEL. WD repeat units lie at residues 371–410, 413–453, 480–520, 525–564, 567–606, 629–667, and 674–712; these read EHHS…QTKA, ISKS…NLCE, AAPS…QQLQ, PEPI…CAMS, AHYG…LKVS, VQVP…KVLE, and GHRA…AHKA.

Belongs to the WD repeat WDR91 family. Interacts with WDR81; involved in early to late endosome cargo transport. Interacts with BECN1; negatively regulates the PI3 kinase/PI3K activity associated with endosomal membranes.

It is found in the early endosome membrane. The protein resides in the late endosome membrane. Functionally, functions as a negative regulator of the PI3 kinase/PI3K activity associated with endosomal membranes via BECN1, a core subunit of the PI3K complex. By modifying the phosphatidylinositol 3-phosphate/PtdInsP3 content of endosomal membranes may regulate endosome fusion, recycling, sorting and early to late endosome transport. It is for instance, required for the delivery of cargos like BST2/tetherin from early to late endosome and thereby participates indirectly to their degradation by the lysosome. May play a role in meiosis. In Pongo abelii (Sumatran orangutan), this protein is WD repeat-containing protein 91.